Reading from the N-terminus, the 312-residue chain is Ornithine carbamoyltransferase (312 aa).

Carbamoyl phosphate-binding positions include 57 to 60, Q84, R108, and 135 to 138; these read STRT and HPCQ. Residues N166, D226, and 230–231 each bind L-ornithine; that span reads SM. Residues 265 to 266 and R293 each bind carbamoyl phosphate; that span reads CL.

This sequence belongs to the aspartate/ornithine carbamoyltransferase superfamily. OTCase family.

It localises to the cytoplasm. It carries out the reaction carbamoyl phosphate + L-ornithine = L-citrulline + phosphate + H(+). It functions in the pathway amino-acid biosynthesis; L-arginine biosynthesis; L-arginine from L-ornithine and carbamoyl phosphate: step 1/3. Its function is as follows. Reversibly catalyzes the transfer of the carbamoyl group from carbamoyl phosphate (CP) to the N(epsilon) atom of ornithine (ORN) to produce L-citrulline. The protein is Ornithine carbamoyltransferase of Brucella ovis (strain ATCC 25840 / 63/290 / NCTC 10512).